A 90-amino-acid polypeptide reads, in one-letter code: Small ribosomal subunit protein uS15c (90 aa).

The protein belongs to the universal ribosomal protein uS15 family. Part of the 30S ribosomal subunit.

It is found in the plastid. It localises to the chloroplast. The chain is Small ribosomal subunit protein uS15c (rps15-A) from Zea mays (Maize).